The sequence spans 102 residues: Keratin-associated protein 25-1 (102 aa).

It belongs to the PMG family. Interacts with hair keratins.

In the hair cortex, hair keratin intermediate filaments are embedded in an interfilamentous matrix, consisting of hair keratin-associated proteins (KRTAP), which are essential for the formation of a rigid and resistant hair shaft through their extensive disulfide bond cross-linking with abundant cysteine residues of hair keratins. The matrix proteins include the high-sulfur and high-glycine-tyrosine keratins. This chain is Keratin-associated protein 25-1 (KRTAP25-1), found in Homo sapiens (Human).